A 78-amino-acid polypeptide reads, in one-letter code: Acyl carrier protein (78 aa).

In terms of domain architecture, Carrier spans 2-77 (SDTAERVKKI…DAVKFIDKAS (76 aa)). Serine 37 carries the post-translational modification O-(pantetheine 4'-phosphoryl)serine.

It belongs to the acyl carrier protein (ACP) family. 4'-phosphopantetheine is transferred from CoA to a specific serine of apo-ACP by AcpS. This modification is essential for activity because fatty acids are bound in thioester linkage to the sulfhydryl of the prosthetic group.

The protein localises to the cytoplasm. Its pathway is lipid metabolism; fatty acid biosynthesis. Carrier of the growing fatty acid chain in fatty acid biosynthesis. In Brucella abortus (strain S19), this protein is Acyl carrier protein.